Here is a 660-residue protein sequence, read N- to C-terminus: UvrABC system protein B (660 aa).

The 159-residue stretch at 25-183 (EGLNKGLKHQ…ALINIHYERN (159 aa)) folds into the Helicase ATP-binding domain. An ATP-binding site is contributed by 38 to 45 (GVTGSGKT). Residues 91–114 (YYDYYQPEAYLPTTDTYIEKDSSV) carry the Beta-hairpin motif. The 163-residue stretch at 431-593 (QIDDLIGEVN…IVPQTIHKAL (163 aa)) folds into the Helicase C-terminal domain. The UVR domain occupies 622 to 657 (ADMVIELEAEMHLAAKNLEFERAAALRDNIKELRST).

This sequence belongs to the UvrB family. As to quaternary structure, forms a heterotetramer with UvrA during the search for lesions. Interacts with UvrC in an incision complex.

It localises to the cytoplasm. In terms of biological role, the UvrABC repair system catalyzes the recognition and processing of DNA lesions. A damage recognition complex composed of 2 UvrA and 2 UvrB subunits scans DNA for abnormalities. Upon binding of the UvrA(2)B(2) complex to a putative damaged site, the DNA wraps around one UvrB monomer. DNA wrap is dependent on ATP binding by UvrB and probably causes local melting of the DNA helix, facilitating insertion of UvrB beta-hairpin between the DNA strands. Then UvrB probes one DNA strand for the presence of a lesion. If a lesion is found the UvrA subunits dissociate and the UvrB-DNA preincision complex is formed. This complex is subsequently bound by UvrC and the second UvrB is released. If no lesion is found, the DNA wraps around the other UvrB subunit that will check the other stand for damage. The chain is UvrABC system protein B from Methanococcoides burtonii (strain DSM 6242 / NBRC 107633 / OCM 468 / ACE-M).